A 340-amino-acid chain; its full sequence is MSNIKILCAGNPLLDLSTHVEMAILDKYELKLGNAILAEDKHLPLYGEIKSGKVEYIPGGAAQNTSRVCQWMLKDKQTVCYTGCVGTDENATILKTATESNGVVTKYQVDSSAPTGACAVLINHKERSMVTNLGAANNFKIAHFQTEEMKAIVNSAQFFYLVGYFLTVSPDSAVHLGKHAAENDKPFLYGLAAPFLIDFFFDKVSELLPYVDIVFANESEAATLGRKMNWGEDLTVIAEKLAAWEKVNTKRTRTVVFTQGPDATLVFQNGVLTKYNPIKVATEDILDLNAAGDSFCGGFLAAYSNGQEIAKCVEAGHYASWEIIRQNGATVPASEPKIQF.

Asp-293 is an active-site residue.

The protein belongs to the carbohydrate kinase PfkB family. In terms of assembly, monomer. Requires Mg(2+) as cofactor.

It carries out the reaction adenosine + ATP = AMP + ADP + H(+). It functions in the pathway purine metabolism; AMP biosynthesis via salvage pathway; AMP from adenosine: step 1/1. Its function is as follows. ATP dependent phosphorylation of adenosine and other related nucleoside analogs to monophosphate derivatives. The polypeptide is Adenosine kinase (adk) (Dictyostelium discoideum (Social amoeba)).